The primary structure comprises 309 residues: Olfactory receptor 5AK2 (309 aa).

Residues 1 to 25 (MTLGNSTEVTEFYLLGFGAQHEFWC) lie on the Extracellular side of the membrane. Asn-5 carries an N-linked (GlcNAc...) asparagine glycan. Residues 26–46 (ILFIVFLLIYVTSIMGNSGII) form a helical membrane-spanning segment. Residues 47-54 (LLINTDSR) lie on the Cytoplasmic side of the membrane. Residues 55–75 (FQTLTYFFLQHLAFVDICYTS) form a helical membrane-spanning segment. The Extracellular portion of the chain corresponds to 76 to 99 (AITPKMLQSFTEEKNLMLFQGCVI). Cys-97 and Cys-189 form a disulfide bridge. Residues 100 to 120 (QFLVYATFATSDCYLLAMMAV) traverse the membrane as a helical segment. The Cytoplasmic portion of the chain corresponds to 121–133 (DPYVAICKPLHYT). Residues 134-154 (VIMSRTVCIRLVAGSYIMGSI) form a helical membrane-spanning segment. Residue Asn-155 is glycosylated (N-linked (GlcNAc...) asparagine). At 155–196 (NASVQTGFTCSLSFCKSNSINHFFCDVPPILALSCSNVDINI) the chain is on the extracellular side. A helical membrane pass occupies residues 197-217 (MLLVVFVGSNLIFTGLVVIFS). Residues 218–237 (YIYIMATILKMSSSAGRKKS) are Cytoplasmic-facing. A helical membrane pass occupies residues 238-258 (FSTCASHLTAVTIFYGTLSYM). Over 259-271 (YLQSHSNNSQENM) the chain is Extracellular. N-linked (GlcNAc...) asparagine glycosylation occurs at Asn-265. A helical transmembrane segment spans residues 272–292 (KVAFIFYGTVIPMLNPLIYSL). Over 293 to 309 (RNKEVKEALKVIGKKLF) the chain is Cytoplasmic.

It belongs to the G-protein coupled receptor 1 family.

The protein localises to the cell membrane. Odorant receptor. The polypeptide is Olfactory receptor 5AK2 (OR5AK2) (Homo sapiens (Human)).